The chain runs to 121 residues: Large ribosomal subunit protein uL14 (121 aa).

The protein belongs to the universal ribosomal protein uL14 family. As to quaternary structure, part of the 50S ribosomal subunit. Forms a cluster with proteins L3 and L19. In the 70S ribosome, L14 and L19 interact and together make contacts with the 16S rRNA in bridges B5 and B8.

In terms of biological role, binds to 23S rRNA. Forms part of two intersubunit bridges in the 70S ribosome. The chain is Large ribosomal subunit protein uL14 from Opitutus terrae (strain DSM 11246 / JCM 15787 / PB90-1).